Consider the following 465-residue polypeptide: Histidine--tRNA ligase (465 aa).

The protein belongs to the class-II aminoacyl-tRNA synthetase family. As to quaternary structure, homodimer.

Its subcellular location is the cytoplasm. It carries out the reaction tRNA(His) + L-histidine + ATP = L-histidyl-tRNA(His) + AMP + diphosphate + H(+). The polypeptide is Histidine--tRNA ligase (hisS) (Pelagibacter ubique (strain HTCC1062)).